A 501-amino-acid polypeptide reads, in one-letter code: Myosin heavy chain, embryonic smooth muscle isoform (501 aa).

Residues 1–457 (REAREKETKA…TLKNRLRRGG (457 aa)) adopt a coiled-coil conformation. A rodlike tail (S2 and LMM domains) region spans residues 1-501 (REAREKETKA…VNETQPPQSE (501 aa)). Disordered regions lie at residues 182–202 (YQRE…QSKE), 221–254 (LASS…ALLD), and 397–501 (MEKA…PQSE). Residues 223–233 (SSERARRHAEQ) are compositionally biased toward basic and acidic residues. Residues 492 to 501 (VNETQPPQSE) show a composition bias toward polar residues.

As to quaternary structure, muscle myosin is a hexameric protein that consists of 2 heavy chain subunits (MHC), 2 alkali light chain subunits (MLC) and 2 regulatory light chain subunits (MLC-2).

It is found in the cytoplasm. Its subcellular location is the myofibril. Its function is as follows. Muscle contraction. The protein is Myosin heavy chain, embryonic smooth muscle isoform of Oryctolagus cuniculus (Rabbit).